A 712-amino-acid chain; its full sequence is Polyribonucleotide nucleotidyltransferase (712 aa).

Mg(2+) contacts are provided by Asp493 and Asp499. Residues 560 to 619 enclose the KH domain; that stretch reads PRLLTFKVDPEDIGKIIGPGGKTVRGITEATGAKVDISDDGTITVSSSVGGQAEAARAMI. Positions 629 to 697 constitute an S1 motif domain; sequence GQVYLGKVTR…HKGRINLTRL (69 aa).

Belongs to the polyribonucleotide nucleotidyltransferase family. Mg(2+) serves as cofactor.

The protein localises to the cytoplasm. The enzyme catalyses RNA(n+1) + phosphate = RNA(n) + a ribonucleoside 5'-diphosphate. Its function is as follows. Involved in mRNA degradation. Catalyzes the phosphorolysis of single-stranded polyribonucleotides processively in the 3'- to 5'-direction. The chain is Polyribonucleotide nucleotidyltransferase from Synechococcus sp. (strain JA-2-3B'a(2-13)) (Cyanobacteria bacterium Yellowstone B-Prime).